Reading from the N-terminus, the 543-residue chain is Glucose transporter HT1 (543 aa).

Residues 1 to 24 form a disordered region; it reads MPEYPTEDTNASGKTSGSSPDDHT. Residues 1 to 38 are Cytoplasmic-facing; it reads MPEYPTEDTNASGKTSGSSPDDHTDDNAPSFFSCENLC. A compositionally biased stretch (polar residues) spans 7-19; sequence EDTNASGKTSGSS. The chain crosses the membrane as a helical span at residues 39–59; sequence IVQVPVSTGSLNGFSIGFVAV. Topologically, residues 60–120 are extracellular; it reads YMHLYEIFSG…GSGYNSLESG (61 aa). Residues Asn90 and Asn91 are each glycosylated (N-linked (GlcNAc...) asparagine). The chain crosses the membrane as a helical span at residues 121–141; sequence LFACSMIVGSMIGSIFAGKFL. Residues 142-147 are Cytoplasmic-facing; the sequence is SKFGLK. Residues 148–168 form a helical membrane-spanning segment; sequence MSFIVSGVLGIVGSALIHVAT. Over 169-172 the chain is Extracellular; the sequence is RGST. Residues 173–193 traverse the membrane as a helical segment; it reads LWVMCVGRFLMGLVLGLVCVA. The Cytoplasmic segment spans residues 194–212; that stretch reads SPMYVNENAHPKYRKTIGV. A helical transmembrane segment spans residues 213 to 233; it reads LFQVFTTFGIMFAALLGLAIV. Residues 234–248 lie on the Extracellular side of the membrane; sequence KTPGHDKASGLLWRM. A helical transmembrane segment spans residues 249–269; sequence QVFCSVSTALSALLLVLGLVV. At 270-300 the chain is on the cytoplasmic side; sequence RKSKTSFAGGVDSAGEGVLDPNEYSVRQMLG. Residues 301 to 321 traverse the membrane as a helical segment; sequence PLAVGAVTAGTLQLTGINAVM. Over 322 to 337 the chain is Extracellular; that stretch reads NYAPEIMRNIGMDPME. The chain crosses the membrane as a helical span at residues 338–358; that stretch reads GNSAVMSWNFVTALVAIPLVS. Residues 359–364 lie on the Cytoplasmic side of the membrane; the sequence is RFTMRQ. Residues 365–385 form a helical membrane-spanning segment; that stretch reads LFLACSFMASCACLIMCGIPV. Topologically, residues 386-400 are extracellular; sequence YPGVASVDNRNIVAT. The chain crosses the membrane as a helical span at residues 401–421; it reads VGIAVFIAAFEFGVGSCFFVL. The Cytoplasmic segment spans residues 422-436; sequence AQDLFPRSFRPTGSS. Residues 437–457 form a helical membrane-spanning segment; that stretch reads FVVMAQFIFNIMINLLYPITV. The Extracellular segment spans residues 458 to 470; sequence EAISGGKGKSPEK. A helical transmembrane segment spans residues 471-491; it reads GQSVSFIIFGIIGIICFVLQL. Over 492–543 the chain is Cytoplasmic; it reads RYLTPWEDGQGTSTSPTARCNAPTSPNNGEGEPATADMSPVEMSTPKHSGAA. Positions 503-519 are enriched in polar residues; sequence TSTSPTARCNAPTSPNN. Residues 503-543 form a disordered region; it reads TSTSPTARCNAPTSPNNGEGEPATADMSPVEMSTPKHSGAA.

The protein belongs to the major facilitator superfamily. Sugar transporter (TC 2.A.1.1) family.

The protein localises to the membrane. Facilitative glucose transporter. Binds D-fructose and cytochalasin-B, but not D-galactose. The chain is Glucose transporter HT1 (HT1) from Trypanosoma vivax (Duttonella vivax).